The sequence spans 254 residues: Aspartate/glutamate leucyltransferase (254 aa).

It belongs to the R-transferase family. Bpt subfamily.

The protein localises to the cytoplasm. The enzyme catalyses N-terminal L-glutamyl-[protein] + L-leucyl-tRNA(Leu) = N-terminal L-leucyl-L-glutamyl-[protein] + tRNA(Leu) + H(+). It catalyses the reaction N-terminal L-aspartyl-[protein] + L-leucyl-tRNA(Leu) = N-terminal L-leucyl-L-aspartyl-[protein] + tRNA(Leu) + H(+). Functions in the N-end rule pathway of protein degradation where it conjugates Leu from its aminoacyl-tRNA to the N-termini of proteins containing an N-terminal aspartate or glutamate. The sequence is that of Aspartate/glutamate leucyltransferase from Xylella fastidiosa (strain M23).